Here is a 287-residue protein sequence, read N- to C-terminus: MAIRKFKPYTPGTRQRVVTDFSEITSSKPERSLIVSKHRVKGRNNRGVITCRHRGGGHKRQYRLVDFRRDKRNINAKVAAIHYDPHRNARLALLFYEDGEKRYIIAPAGVKVGQNVISGESVPIEDGNAMPLSVMPLGSSVHCVELYAGRGAQMVRSAGASAQVMAKEGDYVALKLPSTEVRLVRKECYATLGEVGNSEIRNTSLGKAGRRRWLGRRPQVRGSVMNPCDHPHGGGEGKAPIGRAGPVTPWGKPALGLKTRKKNKPSNKLVVRRRRRISKRSRGGRDS.

Residues 221–287 form a disordered region; the sequence is RGSVMNPCDH…SKRSRGGRDS (67 aa). The span at 258-287 shows a compositional bias: basic residues; sequence KTRKKNKPSNKLVVRRRRRISKRSRGGRDS.

Belongs to the universal ribosomal protein uL2 family. As to quaternary structure, part of the 50S ribosomal subunit. Forms a bridge to the 30S subunit in the 70S ribosome.

One of the primary rRNA binding proteins. Required for association of the 30S and 50S subunits to form the 70S ribosome, for tRNA binding and peptide bond formation. It has been suggested to have peptidyltransferase activity; this is somewhat controversial. Makes several contacts with the 16S rRNA in the 70S ribosome. The sequence is that of Large ribosomal subunit protein uL2 from Prochlorococcus marinus (strain MIT 9301).